A 334-amino-acid chain; its full sequence is Glycerol-3-phosphate dehydrogenase [NAD(P)+] (334 aa).

3 residues coordinate NADPH: tryptophan 13, arginine 33, and lysine 106. Residues lysine 106, glycine 137, and serine 139 each contribute to the sn-glycerol 3-phosphate site. Alanine 141 provides a ligand contact to NADPH. Sn-glycerol 3-phosphate is bound by residues lysine 192, aspartate 245, serine 255, arginine 256, and asparagine 257. Lysine 192 serves as the catalytic Proton acceptor. Arginine 256 provides a ligand contact to NADPH. Valine 280 and glutamate 282 together coordinate NADPH.

This sequence belongs to the NAD-dependent glycerol-3-phosphate dehydrogenase family.

It is found in the cytoplasm. The catalysed reaction is sn-glycerol 3-phosphate + NAD(+) = dihydroxyacetone phosphate + NADH + H(+). The enzyme catalyses sn-glycerol 3-phosphate + NADP(+) = dihydroxyacetone phosphate + NADPH + H(+). It functions in the pathway membrane lipid metabolism; glycerophospholipid metabolism. In terms of biological role, catalyzes the reduction of the glycolytic intermediate dihydroxyacetone phosphate (DHAP) to sn-glycerol 3-phosphate (G3P), the key precursor for phospholipid synthesis. This chain is Glycerol-3-phosphate dehydrogenase [NAD(P)+], found in Chlamydia felis (strain Fe/C-56) (Chlamydophila felis).